We begin with the raw amino-acid sequence, 125 residues long: Small ribosomal subunit protein uS13 (125 aa).

Residues 90-125 (QRHRKGLPVRGQRTKTNARTRKGPKRTVAGKKKATK) are disordered.

This sequence belongs to the universal ribosomal protein uS13 family. In terms of assembly, part of the 30S ribosomal subunit. Forms a loose heterodimer with protein S19. Forms two bridges to the 50S subunit in the 70S ribosome.

In terms of biological role, located at the top of the head of the 30S subunit, it contacts several helices of the 16S rRNA. In the 70S ribosome it contacts the 23S rRNA (bridge B1a) and protein L5 of the 50S subunit (bridge B1b), connecting the 2 subunits; these bridges are implicated in subunit movement. Contacts the tRNAs in the A and P-sites. This chain is Small ribosomal subunit protein uS13, found in Bifidobacterium longum (strain DJO10A).